The following is a 719-amino-acid chain: Photosystem I P700 chlorophyll a apoprotein A1 (719 aa).

Transmembrane regions (helical) follow at residues 59–82, 145–168, 184–208, 280–298, 335–358, 374–400, 422–444, and 520–538; these read IFGA…FHGA, LYCT…FHYH, LNHH…HVSL, TAHH…GHMY, WHAQ…HHMY, LSLF…IFMV, AIIS…LYIH, and FLVH…LILL. Positions 562 and 571 each coordinate [4Fe-4S] cluster. A run of 2 helical transmembrane segments spans residues 578–599 and 653–675; these read HVFL…HFSW and LSAY…MFLF. His664 contacts chlorophyll a'. Chlorophyll a-binding residues include Met672 and Tyr680. Trp681 contributes to the phylloquinone binding site. Residues 713–719 form a helical membrane-spanning segment; the sequence is AVGVTHT.

It belongs to the PsaA/PsaB family. As to quaternary structure, the PsaA/B heterodimer binds the P700 chlorophyll special pair and subsequent electron acceptors. PSI consists of a core antenna complex that captures photons, and an electron transfer chain that converts photonic excitation into a charge separation. The eukaryotic PSI reaction center is composed of at least 11 subunits. The cofactor is P700 is a chlorophyll a/chlorophyll a' dimer, A0 is one or more chlorophyll a, A1 is one or both phylloquinones and FX is a shared 4Fe-4S iron-sulfur center..

The protein localises to the plastid. Its subcellular location is the chloroplast thylakoid membrane. The catalysed reaction is reduced [plastocyanin] + hnu + oxidized [2Fe-2S]-[ferredoxin] = oxidized [plastocyanin] + reduced [2Fe-2S]-[ferredoxin]. In terms of biological role, psaA and PsaB bind P700, the primary electron donor of photosystem I (PSI), as well as the electron acceptors A0, A1 and FX. PSI is a plastocyanin-ferredoxin oxidoreductase, converting photonic excitation into a charge separation, which transfers an electron from the donor P700 chlorophyll pair to the spectroscopically characterized acceptors A0, A1, FX, FA and FB in turn. Oxidized P700 is reduced on the lumenal side of the thylakoid membrane by plastocyanin. This Asplenium nidus (Bird's nest fern) protein is Photosystem I P700 chlorophyll a apoprotein A1.